Here is a 1036-residue protein sequence, read N- to C-terminus: Lethal(2) giant larvae protein homolog 1 (1036 aa).

10 WD repeats span residues 38–71 (SALAFDPELRIMAIGTRSGAVKIYGAPGVEFTGL), 78–119 (VTQM…GLSF), 139–175 (VTVVLLAAGDTVVLGTESGSIFFLDVATLALLEGQTL), 199–233 (SLQGHLQDPSKILIGYSRGLLVIWSQATQSVEHVF), 239–271 (LESLCWGRGGSNIISSHSDGSYAIWSTDTGSPP), 289–331 (AINK…ETLV), 339–373 (VIDFFTVHSTQPEDECDNPQALAVLLEEELVVLDL), 395–473 (TCSA…YKLS), 517–592 (QKVA…RMLI), and 601–662 (TAVT…LRQS). Position 662 is a phosphoserine (S662). A compositionally biased stretch (basic residues) spans 667–677 (RKSRVSGKKRT). Residues 667–688 (RKSRVSGKKRTPAASSKLQEAN) are disordered. The segment covering 679-688 (AASSKLQEAN) has biased composition (polar residues). 4 WD repeats span residues 722-782 (VRCL…KEVQ), 791-843 (AIAV…VSAK), 848-901 (LTAH…VHYS), and 915-938 (VFTRHGQGFYLISPSEFERFSLSA). T957 is modified (phosphothreonine). Phosphoserine is present on residues S964, S982, and S989. The tract at residues 980–1002 (PESCEGSPSSAHSKRADTMEPPE) is disordered.

This sequence belongs to the WD repeat L(2)GL family. Associated with nonmuscle myosin II heavy chain. Interacts with PRKCI/aPKC, PARD6B/Par-6 and PARD6A. Interacts with STX4A. Interacts with RAB10 (GDP-bound form); the interaction is direct and promotes RAB10 association with membranes and activation through competition with the Rab inhibitor GDI1. Interacts with DCAF1. In terms of processing, phosphorylated by PRKCI. In terms of tissue distribution, widely expressed. Expressed in brain, ovary, testis, with moderate expression in lever, uterus, lung and kidney.

It localises to the early endosome membrane. The protein localises to the golgi apparatus. It is found in the trans-Golgi network membrane. Its subcellular location is the cell projection. The protein resides in the axon. It localises to the golgi apparatus membrane. The protein localises to the cytoplasm. It is found in the cytoskeleton. Its function is as follows. Cortical cytoskeleton protein found in a complex involved in maintaining cell polarity and epithelial integrity. Involved in the regulation of mitotic spindle orientation, proliferation, differentiation and tissue organization of neuroepithelial cells. Involved in axonogenesis through RAB10 activation thereby regulating vesicular membrane trafficking toward the axonal plasma membrane. This is Lethal(2) giant larvae protein homolog 1 (LLGL1) from Bos taurus (Bovine).